Reading from the N-terminus, the 180-residue chain is Adenine phosphoribosyltransferase (180 aa).

It belongs to the purine/pyrimidine phosphoribosyltransferase family. As to quaternary structure, homodimer.

The protein localises to the cytoplasm. The enzyme catalyses AMP + diphosphate = 5-phospho-alpha-D-ribose 1-diphosphate + adenine. Its pathway is purine metabolism; AMP biosynthesis via salvage pathway; AMP from adenine: step 1/1. Functionally, catalyzes a salvage reaction resulting in the formation of AMP, that is energically less costly than de novo synthesis. This chain is Adenine phosphoribosyltransferase, found in Sinorhizobium medicae (strain WSM419) (Ensifer medicae).